The primary structure comprises 145 residues: Bacilliredoxin BH2759 (145 aa).

This sequence belongs to the bacilliredoxin family.

This is Bacilliredoxin BH2759 from Halalkalibacterium halodurans (strain ATCC BAA-125 / DSM 18197 / FERM 7344 / JCM 9153 / C-125) (Bacillus halodurans).